The primary structure comprises 185 residues: Meiotically up-regulated gene 5 protein (185 aa).

The protein resides in the cytoplasm. Functionally, required for correct meiotic chromosome segregation. The chain is Meiotically up-regulated gene 5 protein (mug5) from Schizosaccharomyces pombe (strain 972 / ATCC 24843) (Fission yeast).